The sequence spans 467 residues: Mothers against decapentaplegic homolog 2 (467 aa).

Serine 2 is subject to N-acetylserine. At threonine 8 the chain carries Phosphothreonine. The region spanning 10-176 (PVVKRLLGWK…YQRVETPVLP (167 aa)) is the MH1 domain. N6-acetyllysine is present on lysine 19. Zn(2+) contacts are provided by cysteine 74, cysteine 149, cysteine 161, and histidine 166. Over residues 207 to 217 (PAGIEPQSNYI) the composition is skewed to polar residues. Residues 207–251 (PAGIEPQSNYIPETPPPGYISEDGETSDQQLNQSMDTGSPAELSP) are disordered. At threonine 220 the chain carries Phosphothreonine. Residues 221-225 (PPPGY) carry the PY-motif motif. The span at 233–243 (SDQQLNQSMDT) shows a compositional bias: polar residues. The residue at position 240 (serine 240) is a Phosphoserine; by CAMK2. 6 positions are modified to phosphoserine: serine 245, serine 250, serine 255, serine 458, serine 460, and serine 464. The MH2 domain occupies 274–467 (WCSIAYYELN…SPSVRCSSMS (194 aa)). 2 positions are modified to phosphoserine; by TGFBR1: serine 465 and serine 467.

This sequence belongs to the dwarfin/SMAD family. In terms of assembly, monomer; in the absence of TGF-beta. Heterodimer; in the presence of TGF-beta. Forms a heterodimer with co-SMAD, SMAD4, in the nucleus to form the transactivation complex SMAD2/SMAD4. Found in a complex with SMAD3 and TRIM33 upon addition of TGF-beta. Identified in a complex that contains at least ZNF451, SMAD2, SMAD3 and SMAD4. Interacts (via the MH2 domain) with ZFYVE9; may form trimers with the SMAD4 co-SMAD. Interacts with TAZ/WWRT1. Interacts with FOXH1. Interacts with SNW1. Interacts with CREB-binding protein (CBP) and EP300. Interacts with SNON. Interacts with ALK4/ACVR1B. Interacts with SKOR1. Interacts with SKOR2. Interacts with PRDM16. Interacts (via MH2 domain) with LEMD3. Interacts with RBPMS. Interacts with WWP1. Interacts (dephosphorylated form, via the MH1 and MH2 domains) with RANBP3 (via its C-terminal R domain); the interaction results in the export of dephosphorylated SMAD3 out of the nucleus and termination of the TGF-beta signaling. Interacts with PDPK1 (via PH domain). Interacts with DAB2; the interactions are enhanced upon TGF-beta stimulation. Interacts with USP15. Interacts with PPP5C. Interacts with LDLRAD4 (via the SMAD interaction motif). Interacts (via MH2 domain) with PMEPA1 (via the SMAD interaction motif). Interacts with ZFHX3. Interacts with ZNF451. Interacts with SMURF2 when phosphorylated on Ser-465/467. Interacts with PPM1A. Interacts with TGF-beta. Interacts with TGFBR1. Interacts with TGIF. Interacts with SMAD3 and TRIM33. Interacts with ZNF580. Interacts with NEDD4L in response to TGF-beta. Interacts with HGS. Interacts with AIP1. Interacts with WWP1. Interacts with PML. Interacts weakly with ZNF8. Interacts (when phosphorylated) with RNF111; RNF111 acts as an enhancer of the transcriptional responses by mediating ubiquitination and degradation of SMAD2 inhibitors. Interacts with YAP1 (when phosphorylated at 'Ser-55'). Interacts when phosphorylated with IPO7; the interaction facilitates translocation of SMAD2 to the nucleus. Interacts with MTMR4; negatively regulates TGF-beta signaling through SMAD2 dephosphorylation and retention in endosomes. Post-translationally, in response to TGF-beta, phosphorylated on the C-terminal SXS motif by TGF-beta and activin type 1 receptor kinases, phosphorylation declines progressively in a KMT5A-dependent manner. Phosphorylation in this motif is required for interaction with a number of proteins including SMURF2, SNON and SMAD4 in response to TGF-beta. Dephosphorylated in this motif by PPM1A leading to disruption of the SMAD2/3-SMAD4 complex, nuclear export and termination of the TGF-beta signaling. In response to decorin, the naturally occurring inhibitor of TGF-beta signaling, phosphorylated on Ser-240 by CaMK2. Phosphorylated by MAPK3 upon EGF stimulation; which increases transcriptional activity and stability, and is blocked by calmodulin. Phosphorylated by PDPK1. Acetylated on Lys-19 by coactivators in response to TGF-beta signaling, which increases transcriptional activity. In terms of processing, in response to TGF-beta, ubiquitinated by NEDD4L; which promotes its degradation. Monoubiquitinated, leading to prevent DNA-binding. Deubiquitination by USP15 alleviates inhibition and promotes activation of TGF-beta target genes. Ubiquitinated by RNF111, leading to its degradation: only SMAD2 proteins that are 'in use' are targeted by RNF111, RNF111 playing a key role in activating SMAD2 and regulating its turnover.

Its subcellular location is the cytoplasm. The protein localises to the nucleus. Receptor-regulated SMAD (R-SMAD) that is an intracellular signal transducer and transcriptional modulator activated by TGF-beta (transforming growth factor) and activin type 1 receptor kinases. Binds the TRE element in the promoter region of many genes that are regulated by TGF-beta and, on formation of the SMAD2/SMAD4 complex, activates transcription. Promotes TGFB1-mediated transcription of odontoblastic differentiation genes in dental papilla cells. Positively regulates PDPK1 kinase activity by stimulating its dissociation from the 14-3-3 protein YWHAQ which acts as a negative regulator. The sequence is that of Mothers against decapentaplegic homolog 2 (SMAD2) from Bos taurus (Bovine).